A 473-amino-acid chain; its full sequence is Vasculin (473 aa).

Disordered stretches follow at residues 1-25 (MAQH…SSLN), 45-169 (RRHN…KSRA), and 191-342 (VGNL…QERD). Ser-49 is modified (phosphoserine). Arg-87 bears the Omega-N-methylarginine mark. Low complexity predominate over residues 93-107 (GSSRSRSSIFHSGKS). Residues 119–133 (ETGRKEDKRERKQFE) are compositionally biased toward basic and acidic residues. 2 stretches are compositionally biased toward polar residues: residues 194-204 (LPSQPVKNGTG) and 251-286 (AFKS…QQPR). Phosphoserine occurs at positions 274, 276, 322, and 381. Over residues 293 to 329 (MRTDKKSEFLKALKRDRVEEEHEDESRAGSEKDDDSF) the composition is skewed to basic and acidic residues. A disordered region spans residues 444–473 (GPWKNSTFKPTTENDDTETSSSDTSDDDDV). Over residues 456-473 (ENDDTETSSSDTSDDDDV) the composition is skewed to acidic residues.

The protein belongs to the vasculin family. In terms of assembly, interacts with GTF2B, GTF2F2, RNA polymerase II and TBP.

Its subcellular location is the nucleus. In terms of biological role, functions as a GC-rich promoter-specific transactivating transcription factor. This Pongo abelii (Sumatran orangutan) protein is Vasculin (GPBP1).